We begin with the raw amino-acid sequence, 412 residues long: Divalent metal cation transporter MntH (412 aa).

The Cytoplasmic portion of the chain corresponds to 1-19; sequence MTNYRVESSSGRAARKTRL. Residues 20-39 traverse the membrane as a helical segment; sequence ALMGPAFIAAIGYIDPGNFA. Over 40–51 the chain is Periplasmic; sequence TNIQAGASFGYQ. A helical transmembrane segment spans residues 52–71; it reads LLWVVVWANLMAMLIQILSA. Topologically, residues 72-95 are cytoplasmic; that stretch reads KLGIATGKNLAEQIRDHYPRPVVW. The helical transmembrane segment at 96–118 threads the bilayer; the sequence is FYWVQAEIIAMATDLAEFIGAAI. Residues 119-125 lie on the Periplasmic side of the membrane; sequence GFKLILG. A helical membrane pass occupies residues 126–145; that stretch reads VSLLQGAVLTGIATFLILML. The Cytoplasmic portion of the chain corresponds to 146-155; that stretch reads QRRGQKPLEK. The helical transmembrane segment at 156–175 threads the bilayer; sequence VIGGLLLFVAAAYIVELIFS. Over 176 to 196 the chain is Periplasmic; the sequence is QPNLAQLGKGMVIPSLPTSEA. Residues 197-220 form a helical membrane-spanning segment; it reads VFLAAGVLGATIMPHVIYLHSSLT. Over 221-238 the chain is Cytoplasmic; it reads QHLHGGSRQQRYSATKWD. The chain crosses the membrane as a helical span at residues 239–258; it reads VAIAMTIAGFVNLAMMATAA. The Periplasmic portion of the chain corresponds to 259-276; the sequence is AAFHFSGHTGVADLDEAY. Residues 277-297 form a helical membrane-spanning segment; that stretch reads LTLQPLLSHAAATVFGLSLVA. Residues 298 to 327 lie on the Cytoplasmic side of the membrane; the sequence is AGLSSTVVGTLAGQVVMQGFIRFHIPLWVR. The helical transmembrane segment at 328-344 threads the bilayer; that stretch reads RTVTMLPSFIVILMGLD. The Periplasmic segment spans residues 345-350; sequence PTRILV. Residues 351–370 form a helical membrane-spanning segment; the sequence is MSQVLLSFGIALALVPLLIF. At 371-387 the chain is on the cytoplasmic side; sequence TSDSKLMGDLVNSKRVK. Residues 388–406 traverse the membrane as a helical segment; it reads QTGWVIVVLVVALNIWLLV. Residues 407–412 lie on the Periplasmic side of the membrane; the sequence is GTALGL.

Belongs to the NRAMP family.

Its subcellular location is the cell inner membrane. Its function is as follows. H(+)-stimulated, divalent metal cation uptake system. This is Divalent metal cation transporter MntH from Escherichia coli O9:H4 (strain HS).